Reading from the N-terminus, the 495-residue chain is Protein painting of fourth (495 aa).

Positions 1-51 are disordered; sequence MDSKRAALESGDGPDAKRLDTTDDQDKEASGGDGSQVMLAKHVAPYTGHGC. Residues 215–289 form the RRM domain; it reads CSLYVGNIPF…RTLTVRYRRL (75 aa). Positions 332 to 342 are enriched in low complexity; that stretch reads ISDSDNCSDSS. 3 disordered regions span residues 332–358, 432–451, and 461–495; these read ISDS…INEQ, PVPA…KKAK, and GPFR…DPDP. Positions 345 to 358 are enriched in basic and acidic residues; that stretch reads GKEDGKRKKKINEQ. Positions 351–367 match the Bipartite nuclear localization signal motif; the sequence is RKKKINEQEREIEKLKR. Basic and acidic residues predominate over residues 472 to 495; it reads TADEYEKDDRLEELYAQLERDPDP.

Interacts with Zeste. Weakly expressed in embryos. Expression increases during larval and pupal stages. In adults, it is predominantly expressed in males, while it is weakly expressed in females.

It is found in the nucleus. The protein resides in the chromosome. Probable RNA-binding protein that specifically binds to the fourth chromosome and may bind an RNA that spreads the fourth chromosome. May be a reminiscence of X chromosome dosage compensation of ancestral Drosophila species in which the X and the fourth chromosomes are one single chromosome. The protein is Protein painting of fourth (Pof) of Drosophila melanogaster (Fruit fly).